Here is a 351-residue protein sequence, read N- to C-terminus: Photosystem II D2 protein 2 (351 aa).

The chain crosses the membrane as a helical span at residues 39-59 (CAFLSIGGWFTGTTFVTSWYT). His116 is a binding site for chlorophyll a. The helical transmembrane segment at 123 to 139 (GFMLRQFEIARLVNVRP) threads the bilayer. Residues Gln128 and Asn141 each contribute to the pheophytin a site. The helical transmembrane segment at 151-164 (VFVSVFLMYPLGQS) threads the bilayer. His196 is a binding site for chlorophyll a. The helical transmembrane segment at 206-226 (GALLCAIHGATVENTLFEDTK) threads the bilayer. A plastoquinone is bound by residues His213 and Phe260. His213 is a Fe cation binding site. His267 is a Fe cation binding site. Residues 277 to 293 (GLWASAIGLVGIALNMR) traverse the membrane as a helical segment.

This sequence belongs to the reaction center PufL/M/PsbA/D family. As to quaternary structure, PSII is composed of 1 copy each of membrane proteins PsbA, PsbB, PsbC, PsbD, PsbE, PsbF, PsbH, PsbI, PsbJ, PsbK, PsbL, PsbM, PsbT, PsbX, PsbY, PsbZ, Psb30/Ycf12, peripheral proteins PsbO, CyanoQ (PsbQ), PsbU, PsbV and a large number of cofactors. It forms dimeric complexes. The cofactor is The D1/D2 heterodimer binds P680, chlorophylls that are the primary electron donor of PSII, and subsequent electron acceptors. It shares a non-heme iron and each subunit binds pheophytin, quinone, additional chlorophylls, carotenoids and lipids. There is also a Cl(-1) ion associated with D1 and D2, which is required for oxygen evolution. The PSII complex binds additional chlorophylls, carotenoids and specific lipids..

It is found in the cellular thylakoid membrane. The catalysed reaction is 2 a plastoquinone + 4 hnu + 2 H2O = 2 a plastoquinol + O2. In terms of biological role, photosystem II (PSII) is a light-driven water:plastoquinone oxidoreductase that uses light energy to abstract electrons from H(2)O, generating O(2) and a proton gradient subsequently used for ATP formation. It consists of a core antenna complex that captures photons, and an electron transfer chain that converts photonic excitation into a charge separation. The D1/D2 (PsbA/PsbD) reaction center heterodimer binds P680, the primary electron donor of PSII as well as several subsequent electron acceptors. D2 is needed for assembly of a stable PSII complex. This chain is Photosystem II D2 protein 2, found in Acaryochloris marina (strain MBIC 11017).